The primary structure comprises 505 residues: Putative thymidine phosphorylase (505 aa).

This sequence belongs to the thymidine/pyrimidine-nucleoside phosphorylase family. Type 2 subfamily.

It catalyses the reaction thymidine + phosphate = 2-deoxy-alpha-D-ribose 1-phosphate + thymine. The polypeptide is Putative thymidine phosphorylase (Parvibaculum lavamentivorans (strain DS-1 / DSM 13023 / NCIMB 13966)).